We begin with the raw amino-acid sequence, 588 residues long: Aspartate--tRNA ligase (588 aa).

Glu-177 contacts L-aspartate. Residues 201–204 (QLFK) are aspartate. Arg-223 is a binding site for L-aspartate. ATP is bound by residues 223–225 (RDE) and Gln-232. L-aspartate is bound at residue His-451. Glu-485 is an ATP binding site. Arg-492 is a binding site for L-aspartate. 537-540 (GLDR) contacts ATP.

Belongs to the class-II aminoacyl-tRNA synthetase family. Type 1 subfamily. As to quaternary structure, homodimer.

Its subcellular location is the cytoplasm. It carries out the reaction tRNA(Asp) + L-aspartate + ATP = L-aspartyl-tRNA(Asp) + AMP + diphosphate. Its function is as follows. Catalyzes the attachment of L-aspartate to tRNA(Asp) in a two-step reaction: L-aspartate is first activated by ATP to form Asp-AMP and then transferred to the acceptor end of tRNA(Asp). The sequence is that of Aspartate--tRNA ligase from Staphylococcus haemolyticus (strain JCSC1435).